The chain runs to 59 residues: uncharacterized protein (59 aa).

The segment at 1–59 is disordered; the sequence is MAKKPGENTGKNGGIYQEVGPRGGKKDNFATVKDNERLPPTTKPGNGWVLDKRTPDSKK. Basic and acidic residues-rich tracts occupy residues 24–37 and 50–59; these read GKKD…DNER and LDKRTPDSKK.

This is an uncharacterized protein from Salmonella phage P22 (Bacteriophage P22).